We begin with the raw amino-acid sequence, 760 residues long: Formin-like protein 8 (760 aa).

Residues 1–29 form the signal peptide; that stretch reads MAAMFNHPWPNLTLIYFFFIVVLPFQSLS. The segment covering 52-63 has biased composition (pro residues); the sequence is PLLPPSSNPSPP. Residues 52 to 71 form a disordered region; that stretch reads PLLPPSSNPSPPSNNSSSSD. Residues 78–98 traverse the membrane as a helical segment; the sequence is AVLITAASTLLVAGVFFFCLQ. The interval 204–313 is disordered; the sequence is TEIPLLRGRS…VKLKPLHWDK (110 aa). Positions 253-274 are enriched in pro residues; the sequence is TPSPPPPIKKGSSPSPPPPPPV. Residues 296-732 enclose the FH2 domain; that stretch reads SGGETSKQVK…GSPISPSSQR (437 aa).

This sequence belongs to the formin-like family. Class-I subfamily. As to quaternary structure, interacts with profilin.

The protein resides in the cell membrane. Functionally, might be involved in the organization and polarity of the actin cytoskeleton. Interacts with the barbed end of actin filaments and nucleates actin-filament polymerization in vitro. The chain is Formin-like protein 8 (FH8) from Arabidopsis thaliana (Mouse-ear cress).